The chain runs to 97 residues: MSRACELTGKTVQYGNNVSHANNKTRRRFLPNLCNVTLISEVLQQSYRLRVSASALRSVEHRGGLDSFLVRADDKELSQRARLLKRQIVKKKAEQAA.

It belongs to the bacterial ribosomal protein bL28 family.

This is Large ribosomal subunit protein bL28 from Bartonella quintana (strain Toulouse) (Rochalimaea quintana).